The primary structure comprises 141 residues: Sec-independent protein translocase protein TatB (141 aa).

The chain crosses the membrane as a helical span at residues 2–22 (FANVGWGEMLVLVIAGLVILG). The interval 92 to 141 (IFTGRFDSTSSDQPGSGKPPKPQSGPGPAAASGPAATTTPASTPFDPDAT) is disordered. The segment covering 117-141 (PGPAAASGPAATTTPASTPFDPDAT) has biased composition (low complexity).

Belongs to the TatB family. In terms of assembly, the Tat system comprises two distinct complexes: a TatABC complex, containing multiple copies of TatA, TatB and TatC subunits, and a separate TatA complex, containing only TatA subunits. Substrates initially bind to the TatABC complex, which probably triggers association of the separate TatA complex to form the active translocon.

The protein localises to the cell membrane. In terms of biological role, part of the twin-arginine translocation (Tat) system that transports large folded proteins containing a characteristic twin-arginine motif in their signal peptide across membranes. Together with TatC, TatB is part of a receptor directly interacting with Tat signal peptides. TatB may form an oligomeric binding site that transiently accommodates folded Tat precursor proteins before their translocation. This chain is Sec-independent protein translocase protein TatB, found in Mycolicibacterium gilvum (strain PYR-GCK) (Mycobacterium gilvum (strain PYR-GCK)).